The sequence spans 290 residues: uncharacterized protein (290 aa).

Disordered regions lie at residues 89–157 (CSEN…EELS), 172–217 (MANT…MESS), and 261–290 (TANTPPTVVHVSKPSSETSVSIPPSSAVKK). 2 stretches are compositionally biased toward basic and acidic residues: residues 106–124 (DFSKTTVDETIKEKSEKQP) and 142–152 (KTEKLVSKEPS). 2 stretches are compositionally biased toward polar residues: residues 172–183 (MANTSSSANRTG) and 193–202 (KPTTAVQAST). Low complexity-rich tracts occupy residues 207–217 (MSSAESAMESS) and 274–290 (PSSETSVSIPPSSAVKK).

This is an uncharacterized protein from Caenorhabditis elegans.